The following is a 71-amino-acid chain: MFFSLPVLTVLIPLVSLTGLLYSASVEEDFPNGCTSTASLCFYSLLLPITLPVYVFFHLWTWMGLKLFRHN.

A topological domain (cytoplasmic) is located at residue M1. The chain crosses the membrane as a helical span at residues 2-21 (FFSLPVLTVLIPLVSLTGLL). Topologically, residues 22-44 (YSASVEEDFPNGCTSTASLCFYS) are lumenal. A helical transmembrane segment spans residues 45–65 (LLLPITLPVYVFFHLWTWMGL). The Cytoplasmic segment spans residues 66-71 (KLFRHN).

As to quaternary structure, component of the glycosylphosphatidylinositol-N-acetylglucosaminyltransferase (GPI-GnT) complex composed at least by PIGA, PIGC, PIGH, PIGP, PIGQ, PIGY and DPM2.

It localises to the endoplasmic reticulum membrane. The protein operates within glycolipid biosynthesis; glycosylphosphatidylinositol-anchor biosynthesis. Functionally, part of the glycosylphosphatidylinositol-N-acetylglucosaminyltransferase (GPI-GnT) complex that catalyzes the transfer of N-acetylglucosamine from UDP-N-acetylglucosamine to phosphatidylinositol and participates in the first step of GPI biosynthesis. May act by regulating the catalytic subunit PIGA. In Xenopus tropicalis (Western clawed frog), this protein is Phosphatidylinositol N-acetylglucosaminyltransferase subunit Y.